Reading from the N-terminus, the 140-residue chain is MAIERTLSIIKPDATKRNLTGKINAKFEEAGLRIVAQKRIQLTLAQAGQFYAEHKERPFYGELTEFMTSEPVVVQVLEGEGAILKNREVMGATNPANADEGTIRKEFALSVGENSVHGSDSPEAAAREIAFFFSGLELVG.

Positions 11, 59, 87, 93, 104, and 114 each coordinate ATP. Residue H117 is the Pros-phosphohistidine intermediate of the active site.

The protein belongs to the NDK family. As to quaternary structure, homotetramer. Mg(2+) serves as cofactor.

Its subcellular location is the cytoplasm. The enzyme catalyses a 2'-deoxyribonucleoside 5'-diphosphate + ATP = a 2'-deoxyribonucleoside 5'-triphosphate + ADP. It catalyses the reaction a ribonucleoside 5'-diphosphate + ATP = a ribonucleoside 5'-triphosphate + ADP. Major role in the synthesis of nucleoside triphosphates other than ATP. The ATP gamma phosphate is transferred to the NDP beta phosphate via a ping-pong mechanism, using a phosphorylated active-site intermediate. In Paracoccus denitrificans (strain Pd 1222), this protein is Nucleoside diphosphate kinase.